Reading from the N-terminus, the 213-residue chain is 2-dehydro-3-deoxy-phosphogluconate aldolase (213 aa).

Residue Glu45 is the Proton acceptor of the active site. 3 residues coordinate pyruvate: Arg49, Thr73, and Lys133. The active-site Schiff-base intermediate with substrate is Lys133.

Belongs to the KHG/KDPG aldolase family. Homotrimer.

Its subcellular location is the cytoplasm. It catalyses the reaction 2-dehydro-3-deoxy-6-phospho-D-gluconate = D-glyceraldehyde 3-phosphate + pyruvate. It functions in the pathway carbohydrate acid metabolism; 2-dehydro-3-deoxy-D-gluconate degradation; D-glyceraldehyde 3-phosphate and pyruvate from 2-dehydro-3-deoxy-D-gluconate: step 2/2. Functionally, involved in the degradation of glucose via the Entner-Doudoroff pathway. Catalyzes the reversible, stereospecific retro-aldol cleavage of 2-keto-3-deoxy-6-phosphogluconate (KDPG) to pyruvate and D-glyceraldehyde-3-phosphate. This is 2-dehydro-3-deoxy-phosphogluconate aldolase (eda) from Dickeya dadantii (strain 3937) (Erwinia chrysanthemi (strain 3937)).